A 307-amino-acid polypeptide reads, in one-letter code: Streptomycin 6-kinase (307 aa).

Residue 133–145 (LAGLLARLVSVPA) participates in streptomycin binding. Residue Asp-201 is the Proton acceptor of the active site.

It belongs to the aminoglycoside phosphotransferase family.

The enzyme catalyses streptomycin + ATP = streptomycin 6-phosphate + ADP + H(+). The aminoglycoside phosphotransferases achieve inactivation of their antibiotic substrates by phosphorylation. The chain is Streptomycin 6-kinase (sph) from Streptomyces glaucescens.